The sequence spans 842 residues: Circularly permutated Ras protein 1 (842 aa).

GTP is bound by residues aspartate 62–glutamine 66, asparagine 121–aspartate 124, and glycine 181–serine 188. The tract at residues serine 253–glycine 274 is disordered. Positions proline 259 to glycine 274 are enriched in polar residues. One can recognise a VWFA domain in the interval isoleucine 377–valine 627.

The protein belongs to the small GTPase superfamily. CpRas family.

The protein is Circularly permutated Ras protein 1 (cpras1) of Dictyostelium discoideum (Social amoeba).